A 765-amino-acid polypeptide reads, in one-letter code: MASHIVGYPRMGPKRELKFALESFWDGKSSADDLQKVSADLRSDIWKQMSAAGIKYIPSNTFSHYDQVLDTTAMLGAVPSRYGFTSGEIGLDVYFSMARGNASVPAMEMTKWFDTNYHYIVPELGPEVKFSYASHKAVNEYKEAKALGVETVPVLVGPVSYLLLSKLAKGVDKSFDLLSLLPKILPVYKEVIAELKAAGASWIQLDEPLFVMDLEGHKLQAFSGAYAELESTLSGLNVLVETYFADIPAEAYKTLTSLKGVTAFGFDLVRGTKTIDLIKSGFPQGKYLFAGVVDGRNIWANDLAASLITLQSLEGVVGKDKLVVSTSCSLLHTAVDLINETKLDAEIKSWLAFAAQKVVEVDALAKALAGQTNESFFTANADALSSRRSSPRVTNESVQKAAAALKGSDHRRTTEVSARLDAQQKKLNLPILPTTTIGSFPQTVELRRVRREYKAKKISEEDYVKAIKEEIKKVVDIQEDLDIDVLVHGEPERNDMVEYFGEQLSGFAFTANGWVQSYGSRCVKPPVIYGDVSRPKPMTVFWSSTAQSMTKRPMKGMLTGPVTILNWSFVRNDQPRHETCYQIALAIKDEVEDLEKGGIGVIQIDEAALREGLPLRKAEHSFYLDWAVHSFRITNCGVQDSTQIHTHMCYSNFNDIIHSIIDMDADVITIENSRSDEKLLSVFREGVKYGAGIGPGVYDIHSPRIPSTDEIADRINKMLAVLEQNILWVNPDCGLKTRKYTEVKPALKAMVDAAKLIRSQLGSAK.

Positions 18 and 116 each coordinate 5-methyltetrahydropteroyltri-L-glutamate. L-homocysteine contacts are provided by residues 437–439 (IGS) and Glu-490. Residues 437–439 (IGS) and Glu-490 each bind L-methionine. Residues Asp-495, Tyr-518, 521 to 522 (RC), and Trp-567 each bind 5-methyltetrahydropteroyltri-L-glutamate. An L-homocysteine-binding site is contributed by Asp-605. Asp-605 serves as a coordination point for L-methionine. Zn(2+) is bound by residues His-647, Cys-649, His-658, Asp-662, and Glu-671. The Proton donor role is filled by His-701. Cys-733 serves as a coordination point for Zn(2+).

The protein belongs to the vitamin-B12 independent methionine synthase family. Zn(2+) serves as cofactor. Expressed in leaves, stems and siliques.

It localises to the cytoplasm. The protein resides in the cytosol. It catalyses the reaction 5-methyltetrahydropteroyltri-L-glutamate + L-homocysteine = tetrahydropteroyltri-L-glutamate + L-methionine. It functions in the pathway amino-acid biosynthesis; L-methionine biosynthesis via de novo pathway; L-methionine from L-homocysteine (MetE route): step 1/1. In terms of biological role, catalyzes the transfer of a methyl group from 5-methyltetrahydrofolate to homocysteine resulting in methionine formation. The protein is 5-methyltetrahydropteroyltriglutamate--homocysteine methyltransferase 2 (MS2) of Arabidopsis thaliana (Mouse-ear cress).